The following is a 354-amino-acid chain: NADH-quinone oxidoreductase subunit H (354 aa).

A run of 8 helical transmembrane segments spans residues 16–36 (WLAV…PVMI), 90–110 (YLFI…WAVI), 126–146 (VLYV…SGWA), 170–190 (MGFA…TGIV), 197–217 (IWNW…ISGL), 249–269 (VFFL…AIMF), 290–310 (VPGF…FLWF), and 329–349 (VLIP…YFKV).

It belongs to the complex I subunit 1 family. NDH-1 is composed of 14 different subunits. Subunits NuoA, H, J, K, L, M, N constitute the membrane sector of the complex.

The protein localises to the cell inner membrane. The enzyme catalyses a quinone + NADH + 5 H(+)(in) = a quinol + NAD(+) + 4 H(+)(out). Its function is as follows. NDH-1 shuttles electrons from NADH, via FMN and iron-sulfur (Fe-S) centers, to quinones in the respiratory chain. The immediate electron acceptor for the enzyme in this species is believed to be ubiquinone. Couples the redox reaction to proton translocation (for every two electrons transferred, four hydrogen ions are translocated across the cytoplasmic membrane), and thus conserves the redox energy in a proton gradient. This subunit may bind ubiquinone. This is NADH-quinone oxidoreductase subunit H from Hydrogenovibrio crunogenus (strain DSM 25203 / XCL-2) (Thiomicrospira crunogena).